A 161-amino-acid chain; its full sequence is Large ribosomal subunit protein uL15 (161 aa).

The interval 1-43 (MKLSDIADNAGARKKRMRVGRGIGSGKGKTSGRGGKGQTARSG) is disordered. The segment covering 21 to 37 (RGIGSGKGKTSGRGGKG) has biased composition (gly residues).

Belongs to the universal ribosomal protein uL15 family. Part of the 50S ribosomal subunit.

In terms of biological role, binds to the 23S rRNA. The protein is Large ribosomal subunit protein uL15 of Bradyrhizobium sp. (strain ORS 278).